We begin with the raw amino-acid sequence, 309 residues long: Ornithine carbamoyltransferase (309 aa).

Carbamoyl phosphate contacts are provided by residues 52–55 (STRT), Q79, R103, and 130–133 (HPCQ). L-ornithine is bound by residues N161, D221, and 225–226 (SM). Residues 261 to 262 (CL) and R289 each bind carbamoyl phosphate.

It belongs to the aspartate/ornithine carbamoyltransferase superfamily. OTCase family.

It is found in the cytoplasm. The catalysed reaction is carbamoyl phosphate + L-ornithine = L-citrulline + phosphate + H(+). The protein operates within amino-acid biosynthesis; L-arginine biosynthesis; L-arginine from L-ornithine and carbamoyl phosphate: step 1/3. Its function is as follows. Reversibly catalyzes the transfer of the carbamoyl group from carbamoyl phosphate (CP) to the N(epsilon) atom of ornithine (ORN) to produce L-citrulline. In Methanoculleus marisnigri (strain ATCC 35101 / DSM 1498 / JR1), this protein is Ornithine carbamoyltransferase.